The chain runs to 206 residues: MKPQFITLDGIDGAGKSTNLAVIKAWFERRGLPVLFTREPGGTPVGEALREILLNPETKAGLRAETLMMFAARMQHIEDVILPALSDGIHVVSDRFTDATFAYQGGGRGMPSEDIEILEHWVQGGLRPDLTLLLDVPLEVSMARIGQTREKDRFEQEQADFFMRVRSVYLNRAAACPERYAVIDSNLGLDEVRNSIEKVLDGHFGC.

Gly10–Ser17 provides a ligand contact to ATP.

Belongs to the thymidylate kinase family.

It catalyses the reaction dTMP + ATP = dTDP + ADP. In terms of biological role, phosphorylation of dTMP to form dTDP in both de novo and salvage pathways of dTTP synthesis. This chain is Thymidylate kinase, found in Neisseria meningitidis serogroup C / serotype 2a (strain ATCC 700532 / DSM 15464 / FAM18).